Here is a 113-residue protein sequence, read N- to C-terminus: Cell cycle protein GpsB (113 aa).

Positions 36–68 (LDMVIKDYSTFTQEIEALQAENIRLVQELDNAP) form a coiled coil.

This sequence belongs to the GpsB family. As to quaternary structure, forms polymers through the coiled coil domains. Interacts with PBP1, MreC and EzrA.

It is found in the cytoplasm. Divisome component that associates with the complex late in its assembly, after the Z-ring is formed, and is dependent on DivIC and PBP2B for its recruitment to the divisome. Together with EzrA, is a key component of the system that regulates PBP1 localization during cell cycle progression. Its main role could be the removal of PBP1 from the cell pole after pole maturation is completed. Also contributes to the recruitment of PBP1 to the division complex. Not essential for septum formation. The polypeptide is Cell cycle protein GpsB (Listeria monocytogenes serotype 4b (strain CLIP80459)).